The sequence spans 284 residues: Tropomyosin alpha-1 chain (284 aa).

Position 1 is an N-acetylmethionine (M1). The interval 1–38 (MDAIKKKMQMLKLDKENALDRAEQAEADKKAAEDRSKQ) is disordered. A coiled-coil region spans residues 1–284 (MDAIKKKMQM…DHALNDMTSI (284 aa)). Basic and acidic residues predominate over residues 12–38 (KLDKENALDRAEQAEADKKAAEDRSKQ). 3 positions are modified to phosphoserine: A31, S45, and K51. The segment at 116-136 (AEKAADESERGMKVIESRAQK) is disordered. Phosphoserine occurs at positions 174, 186, and 206. K213 carries the N6-acetyllysine modification. S252 bears the Phosphoserine mark. A Phosphotyrosine modification is found at Y261. Phosphoserine is present on S271. S283 carries the phosphoserine; by DAPK1 modification.

This sequence belongs to the tropomyosin family. Homodimer. Heterodimer of an alpha (TPM1, TPM3 or TPM4) and a beta (TPM2) chain. Interacts with HRG (via the HRR domain); the interaction contributes to the antiangiogenic properties of the histidine/proline-rich region (HRR) of HRG. Interacts (via N-terminus) with LMOD2 (via N-terminus) and TMOD1 (via N-terminus). In terms of processing, phosphorylated at Ser-283 by DAPK1 in response to oxidative stress and this phosphorylation enhances stress fiber formation in endothelial cells. In terms of tissue distribution, detected in primary breast cancer tissues but undetectable in normal breast tissues in Sudanese patients. Isoform 1 is expressed in adult and fetal skeletal muscle and cardiac tissues, with higher expression levels in the cardiac tissues. Isoform 10 is expressed in adult and fetal cardiac tissues, but not in skeletal muscle.

Its subcellular location is the cytoplasm. The protein resides in the cytoskeleton. In terms of biological role, binds to actin filaments in muscle and non-muscle cells. Plays a central role, in association with the troponin complex, in the calcium dependent regulation of vertebrate striated muscle contraction. Smooth muscle contraction is regulated by interaction with caldesmon. In non-muscle cells is implicated in stabilizing cytoskeleton actin filaments. The sequence is that of Tropomyosin alpha-1 chain (TPM1) from Homo sapiens (Human).